A 128-amino-acid chain; its full sequence is Small ribosomal subunit protein uS9 (128 aa).

The protein belongs to the universal ribosomal protein uS9 family.

This chain is Small ribosomal subunit protein uS9, found in Amoebophilus asiaticus (strain 5a2).